A 463-amino-acid polypeptide reads, in one-letter code: Cytochrome P450 4d8 (463 aa).

2 residues coordinate heme: Glu267 and Cys409.

It belongs to the cytochrome P450 family. Heme serves as cofactor.

Its subcellular location is the endoplasmic reticulum membrane. The protein localises to the microsome membrane. In terms of biological role, may be involved in the metabolism of insect hormones and in the breakdown of synthetic insecticides. In Drosophila melanogaster (Fruit fly), this protein is Cytochrome P450 4d8 (Cyp4d8).